The following is a 229-amino-acid chain: MEKLTTLTGVGVPLRRSNVDTDQIIPAVFLKRVTKSGFDDALFYAWRRDPNFVLNKPEYAGKGQILVAGPEFGIGSSREHAVWALHDYGFRVVIAPSFADIFYGNTAKNGVLAAIMPQESVELLWKLLEEEPGREMTVSLETRTVTCGDVTLPFEVNDYVRWRLMNGYDDIDLTLQHEDDIAAYEKMRAEKFPFKPKTIPAKHWPEEKIESAREPDDDWTGPLADRGII.

The tract at residues 208–229 is disordered; the sequence is KIESAREPDDDWTGPLADRGII.

Belongs to the LeuD family. LeuD type 1 subfamily. As to quaternary structure, heterodimer of LeuC and LeuD.

It catalyses the reaction (2R,3S)-3-isopropylmalate = (2S)-2-isopropylmalate. The protein operates within amino-acid biosynthesis; L-leucine biosynthesis; L-leucine from 3-methyl-2-oxobutanoate: step 2/4. Functionally, catalyzes the isomerization between 2-isopropylmalate and 3-isopropylmalate, via the formation of 2-isopropylmaleate. The polypeptide is 3-isopropylmalate dehydratase small subunit (Bifidobacterium longum subsp. infantis (strain ATCC 15697 / DSM 20088 / JCM 1222 / NCTC 11817 / S12)).